Here is a 202-residue protein sequence, read N- to C-terminus: Small ribosomal subunit protein uS4 (202 aa).

Positions 15–42 (LGDLPGLTRKAAKRSYPPGQHGQARRKR) are disordered. The S4 RNA-binding domain occupies 90-152 (NRLDNVCFRI…KCSKLLAEAN (63 aa)).

This sequence belongs to the universal ribosomal protein uS4 family. Part of the 30S ribosomal subunit. Contacts protein S5. The interaction surface between S4 and S5 is involved in control of translational fidelity.

Its function is as follows. One of the primary rRNA binding proteins, it binds directly to 16S rRNA where it nucleates assembly of the body of the 30S subunit. In terms of biological role, with S5 and S12 plays an important role in translational accuracy. The polypeptide is Small ribosomal subunit protein uS4 (Synechococcus sp. (strain CC9311)).